Here is a 212-residue protein sequence, read N- to C-terminus: Adenylate kinase (212 aa).

10 to 15 (GAGKGT) contacts ATP. The tract at residues 30-59 (AIGDIFRTIIKTSTSEAELINNYVKQGELI) is NMP. AMP is bound by residues Arg-36, 57–59 (ELI), 85–88 (GYPR), and Gln-92. The segment at 122-160 (GRYSCKNCGKIYNRYFVQPKTDNVCDVCGSSTFDYRKDD) is LID. An ATP-binding site is contributed by Arg-123. The Zn(2+) site is built by Cys-126 and Cys-129. 132 to 133 (IY) lines the ATP pocket. Zn(2+)-binding residues include Cys-146 and Cys-149. AMP is bound by residues Arg-157 and Arg-168. Lys-196 is a binding site for ATP.

Belongs to the adenylate kinase family. In terms of assembly, monomer.

Its subcellular location is the cytoplasm. It carries out the reaction AMP + ATP = 2 ADP. The protein operates within purine metabolism; AMP biosynthesis via salvage pathway; AMP from ADP: step 1/1. In terms of biological role, catalyzes the reversible transfer of the terminal phosphate group between ATP and AMP. Plays an important role in cellular energy homeostasis and in adenine nucleotide metabolism. The sequence is that of Adenylate kinase from Rickettsia conorii (strain ATCC VR-613 / Malish 7).